A 116-amino-acid chain; its full sequence is U30-theraphotoxin-Cg1b (116 aa).

Residues 1-17 (MKLCVLTIATLLVTATS) form the signal peptide. A propeptide spanning residues 18–53 (LETQKEIAEGNELTREETPSLVEHKEDEAAAASEKR) is cleaved from the precursor. Positions 25-45 (AEGNELTREETPSLVEHKEDE) are disordered. Cystine bridges form between C55/C69, C62/C75, C66/C112, and C68/C88.

The protein belongs to the neurotoxin 03 (Tx2) family. 02 subfamily. In terms of tissue distribution, expressed by the venom gland.

It localises to the secreted. Probable ion channel inhibitor. This is U30-theraphotoxin-Cg1b from Chilobrachys guangxiensis (Chinese earth tiger tarantula).